The following is a 778-amino-acid chain: Endonuclease MutS2 (778 aa).

328–335 (GPNTGGKT) serves as a coordination point for ATP. In terms of domain architecture, Smr spans 702–777 (LDLRGKRYEE…GSGATIVTFK (76 aa)).

The protein belongs to the DNA mismatch repair MutS family. MutS2 subfamily. In terms of assembly, homodimer. Binds to stalled ribosomes, contacting rRNA.

Its function is as follows. Endonuclease that is involved in the suppression of homologous recombination and thus may have a key role in the control of bacterial genetic diversity. In terms of biological role, acts as a ribosome collision sensor, splitting the ribosome into its 2 subunits. Detects stalled/collided 70S ribosomes which it binds and splits by an ATP-hydrolysis driven conformational change. Acts upstream of the ribosome quality control system (RQC), a ribosome-associated complex that mediates the extraction of incompletely synthesized nascent chains from stalled ribosomes and their subsequent degradation. Probably generates substrates for RQC. In Streptococcus pneumoniae (strain 70585), this protein is Endonuclease MutS2.